Reading from the N-terminus, the 144-residue chain is Large ribosomal subunit protein uL13 (144 aa).

This sequence belongs to the universal ribosomal protein uL13 family. In terms of assembly, part of the 50S ribosomal subunit.

In terms of biological role, this protein is one of the early assembly proteins of the 50S ribosomal subunit, although it is not seen to bind rRNA by itself. It is important during the early stages of 50S assembly. This Clostridium acetobutylicum (strain ATCC 824 / DSM 792 / JCM 1419 / IAM 19013 / LMG 5710 / NBRC 13948 / NRRL B-527 / VKM B-1787 / 2291 / W) protein is Large ribosomal subunit protein uL13.